A 92-amino-acid chain; its full sequence is MDIPQADLDLLNEKDKNELRGFISNETQRQRVQGQTHALTDSCWKKCVTSPIKTNQLDKTEAVCMADCVERFLDVNLTIMAHVQKITRGGSK.

Positions 43-68 (CWKKCVTSPIKTNQLDKTEAVCMADC) match the Twin CX3C motif motif. 2 cysteine pairs are disulfide-bonded: Cys43-Cys68 and Cys47-Cys64.

This sequence belongs to the small Tim family. As to quaternary structure, heterohexamer; composed of 3 copies of tim8 and 3 copies of tim13, named soluble 70 kDa complex. Associates with the TIM22 complex, whose core is composed of tim22 and tim54. Interacts with the transmembrane regions of multi-pass transmembrane proteins in transit.

Its subcellular location is the mitochondrion inner membrane. In terms of biological role, mitochondrial intermembrane chaperone that participates in the import and insertion of some multi-pass transmembrane proteins into the mitochondrial inner membrane. Also required for the transfer of beta-barrel precursors from the TOM complex to the sorting and assembly machinery (SAM complex) of the outer membrane. Acts as a chaperone-like protein that protects the hydrophobic precursors from aggregation and guide them through the mitochondrial intermembrane space. The tim8-tim13 complex is non essential and only mediates the import of few proteins, while the predominant tim9-tim10 70 kDa complex is crucial and mediates the import of much more proteins. The sequence is that of Mitochondrial import inner membrane translocase subunit tim8 (tim8) from Neurospora crassa (strain ATCC 24698 / 74-OR23-1A / CBS 708.71 / DSM 1257 / FGSC 987).